The chain runs to 332 residues: Ribosomal RNA small subunit methyltransferase H (332 aa).

Residues 39–41 (GGY), Asp56, Phe83, Asp100, and Gln107 contribute to the S-adenosyl-L-methionine site.

Belongs to the methyltransferase superfamily. RsmH family.

It localises to the cytoplasm. It carries out the reaction cytidine(1402) in 16S rRNA + S-adenosyl-L-methionine = N(4)-methylcytidine(1402) in 16S rRNA + S-adenosyl-L-homocysteine + H(+). Specifically methylates the N4 position of cytidine in position 1402 (C1402) of 16S rRNA. The sequence is that of Ribosomal RNA small subunit methyltransferase H from Bartonella quintana (strain Toulouse) (Rochalimaea quintana).